A 533-amino-acid chain; its full sequence is Intestinal-type alkaline phosphatase (533 aa).

Positions 1 to 19 are cleaved as a signal peptide; sequence MQGACVLLLLGLHLQLSLG. Asp-61 is a Mg(2+) binding site. Residues Asp-61 and Ser-111 each coordinate Zn(2+). The active-site Phosphoserine intermediate is the Ser-111. Residues Cys-140 and Cys-202 are joined by a disulfide bond. Ser-174 provides a ligand contact to Mg(2+). Glu-235 contributes to the Ca(2+) binding site. Asn-268 carries N-linked (GlcNAc...) asparagine glycosylation. Phe-288, Glu-289, and Asp-304 together coordinate Ca(2+). Residue Glu-330 coordinates Mg(2+). Residues Asp-335, His-339, Asp-376, and His-377 each contribute to the Zn(2+) site. Asn-429 is a glycosylation site (N-linked (GlcNAc...) asparagine). His-451 contacts Zn(2+). Cys-486 and Cys-493 form a disulfide bridge. Asp-506 carries the GPI-anchor amidated aspartate lipid modification. The propeptide at 507-533 is removed in mature form; it reads AAHLAASPPPLALLAGAMLLLLAPTLY.

Belongs to the alkaline phosphatase family. As to quaternary structure, homodimer. Mg(2+) is required as a cofactor. The cofactor is Zn(2+). Ca(2+) serves as cofactor.

Its subcellular location is the cell membrane. It catalyses the reaction a phosphate monoester + H2O = an alcohol + phosphate. In terms of biological role, alkaline phosphatase that can hydrolyze various phosphate compounds. The polypeptide is Intestinal-type alkaline phosphatase (ALPI) (Bos taurus (Bovine)).